The sequence spans 370 residues: Polygalacturonase 1 (370 aa).

The signal sequence occupies residues 1-18 (MRTSILSMLALGAAAVSA). Cys36 and Cys51 are joined by a disulfide. PbH1 repeat units follow at residues 163-194 (ADNL…DVGE), 195-216 (STYI…AINS), 217-237 (GENI…SIGS), 246-267 (VKNV…RIKT), and 275-297 (VADV…VIEQ). The Proton donor role is filled by Asp209. A disulfide bridge connects residues Cys211 and Cys227. His231 is an active-site residue. N-linked (GlcNAc...) asparagine glycosylation occurs at Asn248. Disulfide bonds link Cys337-Cys342 and Cys361-Cys370.

Belongs to the glycosyl hydrolase 28 family.

It is found in the secreted. It carries out the reaction (1,4-alpha-D-galacturonosyl)n+m + H2O = (1,4-alpha-D-galacturonosyl)n + (1,4-alpha-D-galacturonosyl)m.. The chain is Polygalacturonase 1 (PG1) from Penicillium olsonii.